The following is a 128-amino-acid chain: MTFSVKSPILGFEGIKNVEITKIDDFFVKMQDKDGDTSFTMINPYSLRNYEFDIPTYYQDLMQISDKSELQVYNMLVISSPIEESSVNFMAPIVCNTTNMTLSQVILDPVNYPQYSQAEKISTLLKKK.

The protein belongs to the FliW family. As to quaternary structure, interacts with translational regulator CsrA and flagellin(s).

It is found in the cytoplasm. Functionally, acts as an anti-CsrA protein, binds CsrA and prevents it from repressing translation of its target genes, one of which is flagellin. Binds to flagellin and participates in the assembly of the flagellum. This is Flagellar assembly factor FliW from Campylobacter fetus subsp. fetus (strain 82-40).